The following is a 105-amino-acid chain: Antitoxin HigA-1 (105 aa).

The 55-residue stretch at 15-69 (LKVEFLEPMGITSKALAEAMGVHRNTVSNLINGGVLTAPVAIKLAAALGNTPEFW) folds into the HTH cro/C1-type domain. The segment at residues 27 to 46 (SKALAEAMGVHRNTVSNLIN) is a DNA-binding region (H-T-H motif).

Its function is as follows. Antitoxin component of a type II toxin-antitoxin (TA) system that counteracts the effect of the HigB-1 toxin. Binds to its own promoter and regulates transcription of the higB-1/higA-1 operon. The polypeptide is Antitoxin HigA-1 (higA-1) (Vibrio cholerae serotype O1 (strain ATCC 39315 / El Tor Inaba N16961)).